The sequence spans 137 residues: Ribosome-binding factor A (137 aa).

Residues 114–137 (QLIDEARAEDRELRPEDDETGNNE) are disordered. A compositionally biased stretch (basic and acidic residues) spans 117–127 (DEARAEDRELR). Residues 128–137 (PEDDETGNNE) are compositionally biased toward acidic residues.

Belongs to the RbfA family. As to quaternary structure, monomer. Binds 30S ribosomal subunits, but not 50S ribosomal subunits or 70S ribosomes.

The protein localises to the cytoplasm. One of several proteins that assist in the late maturation steps of the functional core of the 30S ribosomal subunit. Associates with free 30S ribosomal subunits (but not with 30S subunits that are part of 70S ribosomes or polysomes). Required for efficient processing of 16S rRNA. May interact with the 5'-terminal helix region of 16S rRNA. The polypeptide is Ribosome-binding factor A (Alcanivorax borkumensis (strain ATCC 700651 / DSM 11573 / NCIMB 13689 / SK2)).